A 544-amino-acid polypeptide reads, in one-letter code: Putative cysteine ligase BshC (544 aa).

The stretch at 431-463 (LNDTCRTIKEEHEKFIQELSRLDEKIYDFEEKN) forms a coiled coil.

It belongs to the BshC family.

Its function is as follows. Involved in bacillithiol (BSH) biosynthesis. May catalyze the last step of the pathway, the addition of cysteine to glucosamine malate (GlcN-Mal) to generate BSH. This chain is Putative cysteine ligase BshC, found in Natranaerobius thermophilus (strain ATCC BAA-1301 / DSM 18059 / JW/NM-WN-LF).